Here is a 202-residue protein sequence, read N- to C-terminus: Neurensin-2 (202 aa).

2 consecutive transmembrane segments (helical) span residues 65-85 (VAVA…GYAV) and 116-136 (VVGA…LFLI). Residues 162 to 202 (RDEPEKLSPAFHETSSQSPFLTPPSPFGQQSVQTSQPQRDL) form a disordered region. Over residues 188–202 (FGQQSVQTSQPQRDL) the composition is skewed to polar residues.

The protein belongs to the VMP family. Expressed specifically in brain where it is widely expressed, with highest levels of expression in thalamus and hypothalamus. In brain, found in neural cell bodies and detected in many regions of the limbic system, such as the septum nucleus, horizontal and vertical limbs of the diagonal band, hippocampus, amygdaloid nucleus, and habernula nucleus. Also localizes to small vesicles found in the perinuclear region of Neuro2a and PC12 cells.

The protein localises to the membrane. May play a role in maintenance and/or transport of vesicles. The protein is Neurensin-2 of Mus musculus (Mouse).